The chain runs to 343 residues: Ferredoxin--NADP reductase (343 aa).

FAD is bound by residues Cys-18, Asp-37, Gln-45, Tyr-50, Val-90, Phe-125, Asp-290, and Thr-331.

This sequence belongs to the ferredoxin--NADP reductase type 2 family. Homodimer. Requires FAD as cofactor.

It catalyses the reaction 2 reduced [2Fe-2S]-[ferredoxin] + NADP(+) + H(+) = 2 oxidized [2Fe-2S]-[ferredoxin] + NADPH. This chain is Ferredoxin--NADP reductase, found in Parvibaculum lavamentivorans (strain DS-1 / DSM 13023 / NCIMB 13966).